Reading from the N-terminus, the 624-residue chain is Ceramide transfer protein (624 aa).

Residues 1–11 (MSDNQSWNSSG) show a composition bias toward polar residues. The segment at 1–24 (MSDNQSWNSSGSEEDPETESGPPV) is disordered. In terms of domain architecture, PH spans 23-117 (PVERCGVLSK…WIDAIEQHKT (95 aa)). Ser126 carries the phosphoserine modification. Position 132 is a phosphoserine; by PKD (Ser132). Ser135 carries the post-translational modification Phosphoserine. Positions 263–303 (IELMVKREDSWQKRLDKETEKKRRTEEAYKNAMTELKKKSH) form a coiled coil. Position 315 is a phosphoserine (Ser315). Positions 321-327 (EFFDAVE) match the FFAT motif. Phosphotyrosine is present on Tyr372. Ser373, Ser377, and Ser380 each carry phosphoserine. In terms of domain architecture, START spans 389 to 618 (DVHRFSSQVE…FTSYVQEKTA (230 aa)). 4 residues coordinate an N-acylsphing-4-enine: Glu472, Gln493, Asn530, and Tyr579.

In terms of assembly, interacts with VAPA and VAPB. Interaction with VAPB is less efficient than with VAPA. Interacts (via FFAT motif) with MOSPD2 (via MSP domain). In terms of processing, phosphorylation on Ser-132 decreases the affinity toward phosphatidylinositol 4-phosphate at Golgi membranes and reduces ceramide transfer activity. Inactivated by hyperphosphorylation of serine residues by CSNK1G2/CK1 that triggers dissociation from the Golgi complex, thus down-regulating ER-to-Golgi transport of ceramide and sphingomyelin synthesis. Widely expressed.

It localises to the cytoplasm. The protein localises to the golgi apparatus. It is found in the endoplasmic reticulum. It carries out the reaction N-hexadecanoylsphing-4-enine(in) = N-hexadecanoylsphing-4-enine(out). In terms of biological role, shelters ceramides and diacylglycerol lipids inside its START domain and mediates the intracellular trafficking of ceramides and diacylglycerol lipids in a non-vesicular manner. In Homo sapiens (Human), this protein is Ceramide transfer protein.